The primary structure comprises 180 residues: Sec-independent protein translocase protein TatB (180 aa).

Residues 1–21 (MFDIGWSELLVIGVVALIAIG) form a helical membrane-spanning segment. The disordered stretch occupies residues 95 to 180 (IEGVDKPVES…AERLKDAKAS (86 aa)). Residues 103-123 (ESQPAASAAPETSATVEAPAT) show a composition bias toward low complexity. The span at 170–180 (EAERLKDAKAS) shows a compositional bias: basic and acidic residues.

This sequence belongs to the TatB family. In terms of assembly, the Tat system comprises two distinct complexes: a TatABC complex, containing multiple copies of TatA, TatB and TatC subunits, and a separate TatA complex, containing only TatA subunits. Substrates initially bind to the TatABC complex, which probably triggers association of the separate TatA complex to form the active translocon.

The protein resides in the cell inner membrane. Its function is as follows. Part of the twin-arginine translocation (Tat) system that transports large folded proteins containing a characteristic twin-arginine motif in their signal peptide across membranes. Together with TatC, TatB is part of a receptor directly interacting with Tat signal peptides. TatB may form an oligomeric binding site that transiently accommodates folded Tat precursor proteins before their translocation. The sequence is that of Sec-independent protein translocase protein TatB from Bradyrhizobium sp. (strain BTAi1 / ATCC BAA-1182).